A 318-amino-acid polypeptide reads, in one-letter code: 4-hydroxy-3-methylbut-2-enyl diphosphate reductase (318 aa).

Cysteine 12 is a binding site for [4Fe-4S] cluster. (2E)-4-hydroxy-3-methylbut-2-enyl diphosphate-binding residues include histidine 41 and histidine 74. Dimethylallyl diphosphate-binding residues include histidine 41 and histidine 74. The isopentenyl diphosphate site is built by histidine 41 and histidine 74. A [4Fe-4S] cluster-binding site is contributed by cysteine 96. Histidine 124 is a (2E)-4-hydroxy-3-methylbut-2-enyl diphosphate binding site. Histidine 124 contacts dimethylallyl diphosphate. Histidine 124 provides a ligand contact to isopentenyl diphosphate. The active-site Proton donor is glutamate 126. Threonine 168 is a (2E)-4-hydroxy-3-methylbut-2-enyl diphosphate binding site. [4Fe-4S] cluster is bound at residue cysteine 198. (2E)-4-hydroxy-3-methylbut-2-enyl diphosphate is bound by residues serine 226, serine 227, asparagine 228, and serine 270. Positions 226, 227, 228, and 270 each coordinate dimethylallyl diphosphate. Positions 226, 227, 228, and 270 each coordinate isopentenyl diphosphate.

This sequence belongs to the IspH family. [4Fe-4S] cluster serves as cofactor.

The enzyme catalyses isopentenyl diphosphate + 2 oxidized [2Fe-2S]-[ferredoxin] + H2O = (2E)-4-hydroxy-3-methylbut-2-enyl diphosphate + 2 reduced [2Fe-2S]-[ferredoxin] + 2 H(+). It carries out the reaction dimethylallyl diphosphate + 2 oxidized [2Fe-2S]-[ferredoxin] + H2O = (2E)-4-hydroxy-3-methylbut-2-enyl diphosphate + 2 reduced [2Fe-2S]-[ferredoxin] + 2 H(+). It functions in the pathway isoprenoid biosynthesis; dimethylallyl diphosphate biosynthesis; dimethylallyl diphosphate from (2E)-4-hydroxy-3-methylbutenyl diphosphate: step 1/1. The protein operates within isoprenoid biosynthesis; isopentenyl diphosphate biosynthesis via DXP pathway; isopentenyl diphosphate from 1-deoxy-D-xylulose 5-phosphate: step 6/6. Catalyzes the conversion of 1-hydroxy-2-methyl-2-(E)-butenyl 4-diphosphate (HMBPP) into a mixture of isopentenyl diphosphate (IPP) and dimethylallyl diphosphate (DMAPP). Acts in the terminal step of the DOXP/MEP pathway for isoprenoid precursor biosynthesis. This Psychrobacter sp. (strain PRwf-1) protein is 4-hydroxy-3-methylbut-2-enyl diphosphate reductase.